A 422-amino-acid polypeptide reads, in one-letter code: Glutamyl-tRNA reductase (422 aa).

Substrate is bound by residues 49–52 (TCNR), serine 107, 112–114 (EPQ), and glutamine 118. Residue cysteine 50 is the Nucleophile of the active site. 187–192 (GAGETI) lines the NADP(+) pocket.

The protein belongs to the glutamyl-tRNA reductase family. In terms of assembly, homodimer.

The catalysed reaction is (S)-4-amino-5-oxopentanoate + tRNA(Glu) + NADP(+) = L-glutamyl-tRNA(Glu) + NADPH + H(+). It participates in porphyrin-containing compound metabolism; protoporphyrin-IX biosynthesis; 5-aminolevulinate from L-glutamyl-tRNA(Glu): step 1/2. Functionally, catalyzes the NADPH-dependent reduction of glutamyl-tRNA(Glu) to glutamate 1-semialdehyde (GSA). This Pseudomonas aeruginosa (strain ATCC 15692 / DSM 22644 / CIP 104116 / JCM 14847 / LMG 12228 / 1C / PRS 101 / PAO1) protein is Glutamyl-tRNA reductase.